A 424-amino-acid chain; its full sequence is Zinc metalloproteinase-disintegrin-like brevilysin H2b (424 aa).

Q1 carries the post-translational modification Pyrrolidone carboxylic acid. Positions 9 to 207 constitute a Peptidase M12B domain; the sequence is RYVKLAIVAD…YKPQCILNEP (199 aa). N-linked (GlcNAc...) asparagine glycosylation occurs at N69. D96 contributes to the Ca(2+) binding site. 3 disulfide bridges follow: C120–C202, C164–C186, and C166–C169. H145 is a Zn(2+) binding site. E146 is an active-site residue. H149 and H155 together coordinate Zn(2+). A glycan (N-linked (GlcNAc...) asparagine) is linked at N185. Ca(2+) contacts are provided by C202, N205, V217, N220, L222, E224, E227, and D230. Positions 215–301 constitute a Disintegrin domain; it reads PPVCGNELLE…DCPTDDLQRN (87 aa). 14 disulfides stabilise this stretch: C218–C247, C229–C242, C231–C237, C241–C264, C255–C261, C260–C286, C273–C293, C280–C312, C305–C317, C324–C374, C339–C385, C352–C362, C369–C411, and C405–C417. Residues 279–281 carry the D/ECD-tripeptide motif; that stretch reads DCD. Positions 281, 284, and 296 each coordinate Ca(2+).

The protein belongs to the venom metalloproteinase (M12B) family. P-III subfamily. P-IIIa sub-subfamily. In terms of assembly, monomer. Requires Zn(2+) as cofactor. Post-translationally, glycosylated. Expressed by the venom gland.

It localises to the secreted. With respect to regulation, its proteolytic activity is inhibited by EDTA, TPEN, 1,10-phenanthroline, and some thiol compounds, but is enhanced by alkaline earth metal ions (Mg2+, Ca2+, Sr2+, and Ba2+). Its activity is not modulated by urea (4 M). Functionally, non-hemorrhagic metalloproteinase that degrades fibrinogen. The alpha chain (FGA) is rapidly degraded, the beta chain (FGB) is degraded very slowly, while the gamma chain is left intact. Shows a prefential cleavage at X-Leu bonds. Cleaves insulin B chain at '29-His-|-Leu-30', '33-Ser-|-His-34', '38-Ala-|-Leu-39' and '40-Tyr-|-Leu-41' bonds. This Gloydius brevicauda (Korean slamosa snake) protein is Zinc metalloproteinase-disintegrin-like brevilysin H2b.